A 660-amino-acid chain; its full sequence is Protein translocase subunit SecA 2 (660 aa).

ATP is bound by residues Q113, 131–135, and D539; that span reads GEGKT.

The protein belongs to the SecA family. Monomer and homodimer. Part of the essential Sec protein translocation apparatus which comprises SecA, SecYEG and auxiliary proteins SecDF-YajC and YidC.

Its subcellular location is the cell inner membrane. The protein resides in the cytoplasm. It carries out the reaction ATP + H2O + cellular proteinSide 1 = ADP + phosphate + cellular proteinSide 2.. In terms of biological role, part of the Sec protein translocase complex. Interacts with the SecYEG preprotein conducting channel. Has a central role in coupling the hydrolysis of ATP to the transfer of proteins into and across the cell membrane, serving both as a receptor for the preprotein-SecB complex and as an ATP-driven molecular motor driving the stepwise translocation of polypeptide chains across the membrane. The sequence is that of Protein translocase subunit SecA 2 from Bordetella avium (strain 197N).